A 717-amino-acid polypeptide reads, in one-letter code: Asp/Glu-specific dipeptidyl-peptidase (717 aa).

A signal peptide spans methionine 1–alanine 21. Active-site charge relay system residues include histidine 85, aspartate 226, and serine 652.

The protein belongs to the peptidase S46 family.

It is found in the secreted. Its subcellular location is the cell surface. With respect to regulation, enzyme activity is completely blocked by diisopropyl-fluorophosphates, moderately by phenylmethylsulfonyl fluoride (PMSF) and 4-(2-methyl)benzenesulfonyl fluoride, and slightly by pepstatin in vitro. In terms of biological role, catalyzes the removal of dipeptides from the N-terminus of oligopeptides. Shows a strict specificity for acidic residues (Asp or Glu) in the P1 position, and has a hydrophobic residue preference at the P2 position. Is likely involved in amino acid metabolism and bacterial growth/survival of asaccharolytic P.endodontalis, that utilizes amino acids from extracellular proteinaceous nutrients as energy and carbon sources. This chain is Asp/Glu-specific dipeptidyl-peptidase (dpp11), found in Porphyromonas endodontalis (strain ATCC 35406 / DSM 24491 / JCM 8526 / CCUG 16442 / BCRC 14492 / NCTC 13058 / HG 370) (Bacteroides endodontalis).